A 402-amino-acid chain; its full sequence is MLEKNLLPEILLAIHMPLNKGLTRVKAIVIIIVVIIAVIAGVVGYYLINHPSNSVTTSSSSTTTSSSLSSTSISSSTTNITSSQGITVFVAGAYLAILNYLADQFQNATEIPVHVVGSGSFALASQIASQTPVPANVFIPVAYIQAVELTGSRNPGWAIAFLSDQMTIVYSNYTTKSPYWSQLYSNYTMAMETNNTKYWYNFFYLLTTRFSLGIANPNTDPEGLYAYLILQMASYLYANHNISYFVHLVKANPNVKVAPSTANYVAPLKAGTLDFTFSYVSYAVSQGLEYLKLPPWLSFGYYPNETTWYSQFAYNISVNGQTLTIHGNPVYLYITIPLNASNIQTAYQFIGFVLGHESQLTRFNVIPIQPALLYNETSNIPQPILNLLKSGELKYAGNFSEV.

The signal sequence occupies residues 1-44 (MLEKNLLPEILLAIHMPLNKGLTRVKAIVIIIVVIIAVIAGVVG). The disordered stretch occupies residues 53 to 79 (NSVTTSSSSTTTSSSLSSTSISSSTTN).

It belongs to the bacterial solute-binding protein 1 family. WtpA subfamily.

This is an uncharacterized protein from Saccharolobus solfataricus (strain ATCC 35092 / DSM 1617 / JCM 11322 / P2) (Sulfolobus solfataricus).